Here is a 309-residue protein sequence, read N- to C-terminus: Potassium channel subfamily K member 16 (309 aa).

Residues 1–13 lie on the Cytoplasmic side of the membrane; sequence MPSAGLCSCWGGR. A helical membrane pass occupies residues 14–34; that stretch reads VLPLLLAYVCYLLLGATIFQL. The pore-forming intramembrane region spans 98–116; the sequence is SFFFAGTVVTTIGYGNLAP. K(+) contacts are provided by Thr108, Ile109, Gly110, and Tyr111. The selectivity filter 1 stretch occupies residues 108-113; that stretch reads TIGYGN. A helical membrane pass occupies residues 120–140; the sequence is AGQVFCVFYALLGIPLNVIFL. Residues 141–165 lie on the Cytoplasmic side of the membrane; that stretch reads NHLGTGLRAHLAAIERWEDRPRRSQ. The chain crosses the membrane as a helical span at residues 166 to 186; the sequence is VLQVLGLALFLTLGTLVILIF. The segment at residues 202–221 is an intramembrane region (pore-forming); it reads GFYFAFITLSTIGFGDYVVG. Residues Thr212, Ile213, Gly214, and Phe215 each contribute to the K(+) site. The segment at 212–217 is selectivity filter 2; that stretch reads TIGFGD. Residues 238–258 form a helical membrane-spanning segment; that stretch reads IWILLGLAWLALILPLGPLLL. Residues 259–309 are Cytoplasmic-facing; that stretch reads HRCCQLWLLSLRQGCGAKAAPGRRPRRGSTAARGVQVTPQDFPISKKGLGS.

Belongs to the two pore domain potassium channel (TC 1.A.1.8) family. Homodimer; disulfide-linked. Heterodimer with KCNK17 and KCNK5. In terms of tissue distribution, highly expressed in pancreas, in both endocrine (alpha, beta, gamma, delta, and epsilon) and exocrine (acinar and ductal) cells. Expressed in pacreatic beta-cells (at protein level). Expressed in pacreatic delta-cells (at protein level). Not detectable in the other tissues tested.

The protein resides in the endoplasmic reticulum membrane. It is found in the cell membrane. Its subcellular location is the mitochondrion inner membrane. It carries out the reaction K(+)(in) = K(+)(out). It catalyses the reaction Rb(+)(in) = Rb(+)(out). The enzyme catalyses Cs(+)(in) = Cs(+)(out). With respect to regulation, the channel conductance is stimulated by extracellular alkaline pH. Inhibited by Ba(2+) ions, quinine, quinidine, chloroform and halothane. In terms of biological role, k(+) channel that conducts voltage-dependent outward rectifying currents upon membrane depolarization. Voltage sensing is coupled to K(+) electrochemical gradient in an 'ion flux gating' mode where outward but not inward ion flow opens the gate. Homo- and heterodimerizes to form functional channels with distinct regulatory and gating properties. In pancreatic islets, conducts K(+) countercurrents for Ca(2+) release from the endoplasmic reticulum (ER) and regulates the frequency and duration of cytosolic Ca(2+) oscillations coupled to secretion of pancreatic hormones. In pancreatic beta cells, drives ER Ca(2+) efflux, which in turn activates Ca(2+)-dependent plasma membrane K(+) slow currents and cytosolic Ca(2+) influx, overall contributing to synchronous cytosolic Ca(2+) oscillations. Limits glucose-induced cytosolic Ca(2+) oscillations coupled to second-phase INS secretion. Contributes to beta cell adaptation to acute inflammation by maintaining normal cytosolic Ca(2+) levels and INS secretion. May regulate beta cell mitochondrial Ca(2+) levels either indirectly via ER Ca(2+) efflux or directly by hyperpolarizing the mitochondrial membrane potential. Limits mitochondrial Ca(2+) oscillations and ATP production involved in glucose homeostasis upon metabolic stress. In pancreatic delta cells, limits Ca(2+)-induced Ca(2+)-release involved in somatostatin secretion and modulates islet paracrine signaling involved in glucagon secretion. Permeable to other monovalent cations such as Rb(+) and Cs(+). The protein is Potassium channel subfamily K member 16 of Homo sapiens (Human).